A 218-amino-acid chain; its full sequence is dTTP/UTP pyrophosphatase (218 aa).

Aspartate 76 (proton acceptor) is an active-site residue.

This sequence belongs to the Maf family. YhdE subfamily. The cofactor is a divalent metal cation.

It is found in the cytoplasm. It carries out the reaction dTTP + H2O = dTMP + diphosphate + H(+). The catalysed reaction is UTP + H2O = UMP + diphosphate + H(+). Functionally, nucleoside triphosphate pyrophosphatase that hydrolyzes dTTP and UTP. May have a dual role in cell division arrest and in preventing the incorporation of modified nucleotides into cellular nucleic acids. This is dTTP/UTP pyrophosphatase from Cytophaga hutchinsonii (strain ATCC 33406 / DSM 1761 / CIP 103989 / NBRC 15051 / NCIMB 9469 / D465).